The chain runs to 417 residues: MSNSGRLVLRPWIRELILGSETLSSPQAGHLLKVLQDSETPGPSSAPDTPDTGAVLLVSDGTHSVRCVVTRNAIDTSDWEEKEFGFRGTEGRLLLLQACGLRIQVAQDYAPAEFYLQVDRFNLLPTEQPRVQVTGCNQDSDVQKKLNKCLEDHLSESASSSAGLTLSQLLDEVKEDGDHRGALVRLAESCLVLQGPFTARPLTHWATSCSQATEEAVFTVPSFLLHISENEEQILSSIDSSQKAQENPASPSLMPQEESGASVSLLSALPTSDPGQKDNSQPPPTVCSTSPRAQAPSSTPCSSTPSSPLLTCSPSLSPLRHAPTSYQACETRTQFHKLEFRELQWPIKRRQLLPRTGAQEPHSVWEPPERHRDTSAFQYKYGTPSASLHTQVQTARLSPQLVAWALNIVMESELPQV.

The PWI signature appears at 11 to 13; it reads PWI. The residue at position 25 (S25) is a Phosphoserine. Residues 156-245 form an interaction with POT1 region; sequence ESASSSAGLT…SSIDSSQKAQ (90 aa). Polar residues-rich tracts occupy residues 237–250 and 259–292; these read SIDS…NPAS and SGAS…TSPR. The tract at residues 237–309 is disordered; the sequence is SIDSSQKAQE…PCSSTPSSPL (73 aa). Low complexity predominate over residues 296-309; it reads PSSTPCSSTPSSPL. A phosphoserine mark is found at S313 and S317. K348 is covalently cross-linked (Glycyl lysine isopeptide (Lys-Gly) (interchain with G-Cter in SUMO2)).

As to quaternary structure, component of the shelterin complex (telosome) composed of TERF1, TERF2, TINF2, TERF2IP ACD and POT1. Forms heterodimers with POT1. Identified in a complex with POT1 and single-stranded telomeric DNA. Interacts with STN1 and TINF2.

Its subcellular location is the nucleus. The protein localises to the chromosome. The protein resides in the telomere. Functionally, component of the shelterin complex (telosome) that is involved in the regulation of telomere length and protection. Shelterin associates with arrays of double-stranded TTAGGG repeats added by telomerase and protects chromosome ends. Without its protective activity, telomeres are no longer hidden from the DNA damage surveillance and chromosome ends are inappropriately processed by DNA repair pathways. Promotes binding of POT1 to single-stranded telomeric DNA. Modulates the inhibitory effects of POT1 on telomere elongation. The ACD-POT1 heterodimer enhances telomere elongation by recruiting telomerase to telomeres and increasing its processivity. May play a role in organogenesis. This Rattus norvegicus (Rat) protein is Adrenocortical dysplasia protein homolog.